The following is a 67-amino-acid chain: MPKMKTRKTAAKRFHVTGTGKIMRSKGMKSHLRRNKSARVRRQFDEMSQVAGVDRARIQKLIPYGVS.

It belongs to the bacterial ribosomal protein bL35 family.

In Dehalococcoides mccartyi (strain ATCC BAA-2266 / KCTC 15142 / 195) (Dehalococcoides ethenogenes (strain 195)), this protein is Large ribosomal subunit protein bL35.